Reading from the N-terminus, the 542-residue chain is Chaperonin GroEL (542 aa).

Residues 29–32 (TLGP), 86–90 (DGTTT), Gly413, and Asp492 contribute to the ATP site.

Belongs to the chaperonin (HSP60) family. Forms a cylinder of 14 subunits composed of two heptameric rings stacked back-to-back. Interacts with the co-chaperonin GroES.

It is found in the cytoplasm. It carries out the reaction ATP + H2O + a folded polypeptide = ADP + phosphate + an unfolded polypeptide.. In terms of biological role, together with its co-chaperonin GroES, plays an essential role in assisting protein folding. The GroEL-GroES system forms a nano-cage that allows encapsulation of the non-native substrate proteins and provides a physical environment optimized to promote and accelerate protein folding. The protein is Chaperonin GroEL of Nocardia asteroides.